A 146-amino-acid chain; its full sequence is D-aminoacyl-tRNA deacylase (146 aa).

The Gly-cisPro motif, important for rejection of L-amino acids signature appears at 137–138 (GP).

It belongs to the DTD family. Homodimer.

It is found in the cytoplasm. It carries out the reaction glycyl-tRNA(Ala) + H2O = tRNA(Ala) + glycine + H(+). The enzyme catalyses a D-aminoacyl-tRNA + H2O = a tRNA + a D-alpha-amino acid + H(+). In terms of biological role, an aminoacyl-tRNA editing enzyme that deacylates mischarged D-aminoacyl-tRNAs. Also deacylates mischarged glycyl-tRNA(Ala), protecting cells against glycine mischarging by AlaRS. Acts via tRNA-based rather than protein-based catalysis; rejects L-amino acids rather than detecting D-amino acids in the active site. By recycling D-aminoacyl-tRNA to D-amino acids and free tRNA molecules, this enzyme counteracts the toxicity associated with the formation of D-aminoacyl-tRNA entities in vivo and helps enforce protein L-homochirality. This is D-aminoacyl-tRNA deacylase from Bacillus cereus (strain G9842).